A 232-amino-acid chain; its full sequence is Platelet-activating factor acetylhydrolase IB subunit alpha1 (232 aa).

The tract at residues 1-20 (MSGEGENPASKPTPVQDVQG) is disordered. S2 is subject to N-acetylserine. A Phosphoserine modification is found at S2. Residues S48, D193, and H196 contribute to the active site.

This sequence belongs to the 'GDSL' lipolytic enzyme family. Platelet-activating factor acetylhydrolase IB beta/gamma subunits subfamily. In terms of assembly, forms a catalytic dimer which is either homodimer (alpha1/alpha1 homodimer) or heterodimer with PAFAH1B2 (alpha1/alpha2 heterodimer). Component of the cytosolic (PAF-AH (I)) heterotetrameric enzyme, which is composed of PAFAH1B1 (beta), PAFAH1B2 (alpha2) and PAFAH1B3 (alpha1) subunits. The catalytic activity of the enzyme resides in the alpha1 (PAFAH1B3) and alpha2 (PAFAH1B2) subunits, whereas the beta subunit (PAFAH1B1) has regulatory activity. Trimer formation is not essential for the catalytic activity. Interacts with VLDLR; this interaction may modulate the Reelin pathway.

The protein resides in the cytoplasm. It catalyses the reaction a 1-O-alkyl-2-acetyl-sn-glycero-3-phosphocholine + H2O = a 1-O-alkyl-sn-glycero-3-phosphocholine + acetate + H(+). It carries out the reaction 1-O-hexadecyl-2-acetyl-sn-glycero-3-phosphocholine + H2O = 1-O-hexadecyl-sn-glycero-3-phosphocholine + acetate + H(+). The catalysed reaction is 1-O-hexadecyl-2-acetyl-sn-glycero-3-phosphate + H2O = 1-O-hexadecyl-sn-glycero-3-phosphate + acetate + H(+). Beta subunit (PAFAH1B1) inhibits the acetylhydrolase activity of the alpha1/alpha1 catalytic homodimer. Its function is as follows. Alpha1 catalytic subunit of the cytosolic type I platelet-activating factor (PAF) acetylhydrolase (PAF-AH (I)) heterotetrameric enzyme that catalyzes the hydrolyze of the acetyl group at the sn-2 position of PAF and its analogs and modulates the action of PAF. The activity and substrate specificity of PAF-AH (I) are affected by its subunit composition. Both alpha1/alpha1 homodimer (PAFAH1B3/PAFAH1B3 homodimer) and alpha1/alpha2 heterodimer(PAFAH1B3/PAFAH1B2 heterodimer) hydrolyze 1-O-alkyl-2-acetyl-sn-glycero-3-phosphoric acid (AAGPA) more efficiently than PAF, but they have little hydrolytic activity towards 1-O-alkyl-2-acetyl-sn-glycero-3-phosphorylethanolamine (AAGPE). Plays an important role during the development of brain. This chain is Platelet-activating factor acetylhydrolase IB subunit alpha1, found in Mus musculus (Mouse).